The sequence spans 650 residues: Protein kinase domain-containing protein ppk38 (650 aa).

A Protein kinase domain is found at 33-315; it reads VTVKRYLAEG…MRNVPIHIYD (283 aa). 3 disordered regions span residues 344–442, 517–571, and 591–616; these read IHQS…PTTP, KVAA…PTNM, and RRVSKPEKEHTNPNAEQGDVIPEKPM. Composition is skewed to polar residues over residues 369-415 and 533-554; these read NVNS…NFRV and SVENPQNNISAPTPSSLQSSNA.

This chain is Protein kinase domain-containing protein ppk38 (ppk38), found in Schizosaccharomyces pombe (strain 972 / ATCC 24843) (Fission yeast).